We begin with the raw amino-acid sequence, 152 residues long: Xanthine-guanine phosphoribosyltransferase (152 aa).

Residues 37–38 (RG), R69, and 88–96 (DDLVDTGGT) each bind 5-phospho-alpha-D-ribose 1-diphosphate. A GMP-binding site is contributed by R69. D89 provides a ligand contact to Mg(2+). Guanine contacts are provided by D92 and I135. Positions 92 and 135 each coordinate xanthine. Residues 92–96 (DTGGT) and 134–135 (WI) contribute to the GMP site.

It belongs to the purine/pyrimidine phosphoribosyltransferase family. XGPT subfamily. Homotetramer. Requires Mg(2+) as cofactor.

The protein resides in the cell inner membrane. The catalysed reaction is GMP + diphosphate = guanine + 5-phospho-alpha-D-ribose 1-diphosphate. It catalyses the reaction XMP + diphosphate = xanthine + 5-phospho-alpha-D-ribose 1-diphosphate. The enzyme catalyses IMP + diphosphate = hypoxanthine + 5-phospho-alpha-D-ribose 1-diphosphate. It participates in purine metabolism; GMP biosynthesis via salvage pathway; GMP from guanine: step 1/1. It functions in the pathway purine metabolism; XMP biosynthesis via salvage pathway; XMP from xanthine: step 1/1. Its function is as follows. Purine salvage pathway enzyme that catalyzes the transfer of the ribosyl-5-phosphate group from 5-phospho-alpha-D-ribose 1-diphosphate (PRPP) to the N9 position of the 6-oxopurines guanine and xanthine to form the corresponding ribonucleotides GMP (guanosine 5'-monophosphate) and XMP (xanthosine 5'-monophosphate), with the release of PPi. To a lesser extent, also acts on hypoxanthine. In Photobacterium profundum (strain SS9), this protein is Xanthine-guanine phosphoribosyltransferase.